A 456-amino-acid polypeptide reads, in one-letter code: MTDSGEIDPQTAEEKVTDAQTAALSLSNLSTARRNEALTAIADTIERNVDRILEANAADVADAEKQVDAGEYTQAFVDRLTLSTSKIESIAEMVRSVAEQDDPLGETLTARELDDDLNLYKVTVPIGVIGTVFESRPDALVQISALSLKSGNAVILKGGSEAERSNRVLYNCILEATPEVPSGWAQLIEAREDVQTLLEMDDAVDLIMPRGSSSFVQYVQDNTSIPVLGHTEGVCHVYVDSEADLEMATAVAYDAKVQYPAVCNAVETLLVHESVAPSFLSQMMKQYRDAGVEIRGDERTQSIVDTESNISEEIIAATEADWTTEYGDRIVSIAVVDSLTDAIDHINMYGSKHTESILTQDDNRAEQFMRAVDAASVFHNASTRFADGFRFGLGAEVGISTGKIHARGPVGLDGLTTYKYHLEGDGQQVATYAGSDAKPFDHAEFDETWPVRNDDG.

This sequence belongs to the gamma-glutamyl phosphate reductase family.

The protein localises to the cytoplasm. The catalysed reaction is L-glutamate 5-semialdehyde + phosphate + NADP(+) = L-glutamyl 5-phosphate + NADPH + H(+). It functions in the pathway amino-acid biosynthesis; L-proline biosynthesis; L-glutamate 5-semialdehyde from L-glutamate: step 2/2. In terms of biological role, catalyzes the NADPH-dependent reduction of L-glutamate 5-phosphate into L-glutamate 5-semialdehyde and phosphate. The product spontaneously undergoes cyclization to form 1-pyrroline-5-carboxylate. The protein is Gamma-glutamyl phosphate reductase of Haloquadratum walsbyi (strain DSM 16790 / HBSQ001).